A 160-amino-acid polypeptide reads, in one-letter code: Phosphopantetheine adenylyltransferase (160 aa).

Threonine 10 lines the substrate pocket. ATP-binding positions include 10 to 11 and histidine 18; that span reads TF. The substrate site is built by lysine 42, leucine 74, and arginine 88. Residues 89–91, glutamate 99, and 124–130 each bind ATP; these read GLR and NSFISST.

Belongs to the bacterial CoaD family. In terms of assembly, homohexamer. Mg(2+) serves as cofactor.

It localises to the cytoplasm. The enzyme catalyses (R)-4'-phosphopantetheine + ATP + H(+) = 3'-dephospho-CoA + diphosphate. It functions in the pathway cofactor biosynthesis; coenzyme A biosynthesis; CoA from (R)-pantothenate: step 4/5. In terms of biological role, reversibly transfers an adenylyl group from ATP to 4'-phosphopantetheine, yielding dephospho-CoA (dPCoA) and pyrophosphate. This chain is Phosphopantetheine adenylyltransferase, found in Aeromonas hydrophila subsp. hydrophila (strain ATCC 7966 / DSM 30187 / BCRC 13018 / CCUG 14551 / JCM 1027 / KCTC 2358 / NCIMB 9240 / NCTC 8049).